The sequence spans 123 residues: Dihydroneopterin triphosphate 2'-epimerase (123 aa).

The protein belongs to the DHNA family. In terms of assembly, homooctamer. Dimer of tetramers.

It carries out the reaction 7,8-dihydroneopterin 3'-triphosphate = 7,8-dihydromonapterin 3'-triphosphate. In terms of biological role, catalyzes the epimerization of carbon 2' of the side chain of 7,8-dihydroneopterin triphosphate (H2NTP) to form 7,8-dihydromonapterin triphosphate (H2MTP). Is required for tetrahydromonapterin biosynthesis. The protein is Dihydroneopterin triphosphate 2'-epimerase of Pseudomonas aeruginosa (strain ATCC 15692 / DSM 22644 / CIP 104116 / JCM 14847 / LMG 12228 / 1C / PRS 101 / PAO1).